A 286-amino-acid chain; its full sequence is Lipoyl synthase (286 aa).

[4Fe-4S] cluster contacts are provided by cysteine 29, cysteine 34, cysteine 40, cysteine 55, cysteine 59, cysteine 62, and serine 265. Residues 41–254 (WGSGTATFMI…EKIAYSLGFS (214 aa)) form the Radical SAM core domain.

It belongs to the radical SAM superfamily. Lipoyl synthase family. [4Fe-4S] cluster serves as cofactor.

It is found in the cytoplasm. It carries out the reaction [[Fe-S] cluster scaffold protein carrying a second [4Fe-4S](2+) cluster] + N(6)-octanoyl-L-lysyl-[protein] + 2 oxidized [2Fe-2S]-[ferredoxin] + 2 S-adenosyl-L-methionine + 4 H(+) = [[Fe-S] cluster scaffold protein] + N(6)-[(R)-dihydrolipoyl]-L-lysyl-[protein] + 4 Fe(3+) + 2 hydrogen sulfide + 2 5'-deoxyadenosine + 2 L-methionine + 2 reduced [2Fe-2S]-[ferredoxin]. Its pathway is protein modification; protein lipoylation via endogenous pathway; protein N(6)-(lipoyl)lysine from octanoyl-[acyl-carrier-protein]: step 2/2. Its function is as follows. Catalyzes the radical-mediated insertion of two sulfur atoms into the C-6 and C-8 positions of the octanoyl moiety bound to the lipoyl domains of lipoate-dependent enzymes, thereby converting the octanoylated domains into lipoylated derivatives. The sequence is that of Lipoyl synthase from Sulfolobus acidocaldarius (strain ATCC 33909 / DSM 639 / JCM 8929 / NBRC 15157 / NCIMB 11770).